The following is a 300-amino-acid chain: ADP-polyphosphate phosphotransferase 1 (300 aa).

It belongs to the polyphosphate kinase 2 (PPK2) family. Class I subfamily. Homotetramer. The cofactor is Mg(2+).

The catalysed reaction is [phosphate](n) + ATP = [phosphate](n+1) + ADP. It carries out the reaction [phosphate](n) + GTP = [phosphate](n+1) + GDP. Functionally, uses inorganic polyphosphate (polyP) as a donor to convert ADP to ATP. Can also convert GDP to GTP, with lower efficiency. Cannot dephosphorylate ATP in the presence of polyP. The sequence is that of ADP-polyphosphate phosphotransferase 1 from Rhizobium meliloti (strain 1021) (Ensifer meliloti).